Consider the following 527-residue polypeptide: MIVLGLEGTAHTISCGILDENSIMANVSSMYKPKTGGIHPTQAAAHHVDKVSEVIAKAIEIAGIKPSDIDLVAFSMGPGLGPSLRVTSTAARTLAVTLKRPIIGVNHPLGHIEIGKRLSGAQDPVMLYVSGGNTQVIAHLNGRYRVLGETLDIGIGNMIDKFARYAGIPFPGGPEIEKLAKDGRKLLTLPYSVKGMDTSFSGILTSALEYLKKGEPVEDISFSIQETAFSMLVEVLERALYVSGKDEVLMAGGVALNNRLREMVSEMGREVDATTYMTDKNYCMDNGAMIAQAGLLMYKSGIRMNIEDTSINPRYRIDEVDAPWVIEKNVKYRDAGAESRIVNTDFYGRSAVKKIRIAKGYRLKELDERIRGERMKNEFTVIRRMRDAGICVPIVYDYDPFEKTLTLSQIQGELLRDVIRARPNVMGNVGHDVAVMHKNKISHGDLTVNNIIVSDRICFIDASMGKVNAELEDLAVDVYTLEDSINSLSENGKTLMKEFKMSYRANFPQANDVLNIVEDIRRRHRYV.

The interval Met-1–Trp-324 is kae1. The Fe cation site is built by His-107, His-111, and Tyr-128. L-threonylcarbamoyladenylate is bound by residues Tyr-128–Gly-132, Asp-160, Gly-173, Glu-177, and Asn-257. Position 285 (Asp-285) interacts with Fe cation. The 198-residue stretch at Val-330 to Val-527 folds into the Protein kinase domain. Residues Arg-333–Ile-341 and Lys-354 each bind ATP. Asp-445 (proton acceptor; for kinase activity) is an active-site residue.

In the N-terminal section; belongs to the KAE1 / TsaD family. It in the C-terminal section; belongs to the protein kinase superfamily. Tyr protein kinase family. BUD32 subfamily. In terms of assembly, component of the KEOPS complex that consists of Kae1, Bud32, Cgi121 and Pcc1; the whole complex dimerizes. The cofactor is Fe(2+).

The protein localises to the cytoplasm. The catalysed reaction is L-seryl-[protein] + ATP = O-phospho-L-seryl-[protein] + ADP + H(+). It carries out the reaction L-threonyl-[protein] + ATP = O-phospho-L-threonyl-[protein] + ADP + H(+). It catalyses the reaction L-threonylcarbamoyladenylate + adenosine(37) in tRNA = N(6)-L-threonylcarbamoyladenosine(37) in tRNA + AMP + H(+). Required for the formation of a threonylcarbamoyl group on adenosine at position 37 (t(6)A37) in tRNAs that read codons beginning with adenine. Is a component of the KEOPS complex that is probably involved in the transfer of the threonylcarbamoyl moiety of threonylcarbamoyl-AMP (TC-AMP) to the N6 group of A37. The Kae1 domain likely plays a direct catalytic role in this reaction. The Bud32 domain probably displays kinase activity that regulates Kae1 function. In Thermoplasma volcanium (strain ATCC 51530 / DSM 4299 / JCM 9571 / NBRC 15438 / GSS1), this protein is Probable bifunctional tRNA threonylcarbamoyladenosine biosynthesis protein.